Here is an 858-residue protein sequence, read N- to C-terminus: Bifunctional uridylyltransferase/uridylyl-removing enzyme (858 aa).

The interval 1-324 (MSASVAEPPP…PATSGVTRVL (324 aa)) is uridylyltransferase. Positions 325–681 (SPGRFVEKQG…ARPSPVGDAL (357 aa)) are uridylyl-removing. The 123-residue stretch at 443–565 (VDQHILMVLR…VGSERRLTAL (123 aa)) folds into the HD domain. ACT domains lie at 682-761 (QVLV…PEPS) and 790-858 (ILSV…AIAV).

It belongs to the GlnD family. Requires Mg(2+) as cofactor.

It carries out the reaction [protein-PII]-L-tyrosine + UTP = [protein-PII]-uridylyl-L-tyrosine + diphosphate. The enzyme catalyses [protein-PII]-uridylyl-L-tyrosine + H2O = [protein-PII]-L-tyrosine + UMP + H(+). Its activity is regulated as follows. Uridylyltransferase (UTase) activity is inhibited by glutamine, while glutamine activates uridylyl-removing (UR) activity. Its function is as follows. Modifies, by uridylylation and deuridylylation, the PII regulatory proteins (GlnB and homologs), in response to the nitrogen status of the cell that GlnD senses through the glutamine level. Under low glutamine levels, catalyzes the conversion of the PII proteins and UTP to PII-UMP and PPi, while under higher glutamine levels, GlnD hydrolyzes PII-UMP to PII and UMP (deuridylylation). Thus, controls uridylylation state and activity of the PII proteins, and plays an important role in the regulation of nitrogen assimilation and metabolism. This Burkholderia pseudomallei (strain K96243) protein is Bifunctional uridylyltransferase/uridylyl-removing enzyme.